Here is a 293-residue protein sequence, read N- to C-terminus: Insulin-like growth factor-binding protein 3 (293 aa).

The N-terminal stretch at 1 to 27 is a signal peptide; the sequence is MQRARPALWAAALIALALLRGPPAARA. The 84-residue stretch at 36–119 folds into the IGFBP N-terminal domain; it reads PVVRCEPCDA…LDGRGICANA (84 aa). Disulfide bonds link C40–C69, C43–C71, C51–C72, C60–C75, C83–C96, and C90–C116. N118 and N138 each carry an N-linked (GlcNAc...) asparagine glycan. Disordered stretches follow at residues 132–166 and 178–213; these read APPA…PDSK and KKGH…TEYG. Residue S150 is modified to Phosphoserine. The span at 178–192 shows a compositional bias: basic and acidic residues; it reads KKGHAKDSQRYKVDY. Residues 193 to 204 are compositionally biased toward polar residues; sequence ESQSTDTQNFSS. N-linked (GlcNAc...) asparagine glycosylation is present at N201. S203 carries the phosphoserine modification. Residues 212–287 form the Thyroglobulin type-1 domain; the sequence is YGPCRREMED…DVKGKGDVHC (76 aa). Cystine bridges form between C215–C242, C253–C264, and C266–C287.

As to quaternary structure, interacts with XLKD1. Binds IGF2 more than IGF1. Forms a ternary complex of about 140 to 150 kDa with IGF1 or IGF2 and a 85 kDa glycoprotein (ALS). Interacts with humanin; humanin competes with importin KPNB1 for binding to IGFBP3, blocking IGFBP3 nuclear import and IGFBP3-mediated apoptosis. Interacts with TMEM219. Interacts with RXRA; this interaction modulates the transcriptional activity of RXRA. Interacts with LRP1; this interaction mediates cell growth inhibition independent of IGF1. Post-translationally, phosphorylated by FAM20C in the extracellular medium. Phosphorylated by CK2; resulting in decreased nuclear localization.

It localises to the secreted. Its subcellular location is the nucleus. In terms of biological role, multifunctional protein that plays a critical role in regulating the availability of IGFs such as IGF1 and IGF2 to their receptors and thereby regulates IGF-mediated cellular processes including proliferation, differentiation, and apoptosis in a cell-type specific manner. Also exhibits IGF-independent antiproliferative and apoptotic effects mediated by its receptor TMEM219/IGFBP-3R. Inhibits the positive effect of humanin on insulin sensitivity. Promotes testicular germ cell apoptosis. Acts via LRP-1/alpha2M receptor, also known as TGF-beta type V receptor, to mediate cell growth inhibition independent of IGF1. Mechanistically, induces serine-specific dephosphorylation of IRS1 or IRS2 upon ligation to its receptor, leading to the inhibitory cascade. In the nucleus, interacts with transcription factors such as retinoid X receptor-alpha/RXRA to regulate transcriptional signaling and apoptosis. The polypeptide is Insulin-like growth factor-binding protein 3 (IGFBP3) (Sus scrofa (Pig)).